The chain runs to 381 residues: Opsin Rh2 (381 aa).

The Extracellular portion of the chain corresponds to 1–56 (MERSLLPEPPLAMALLGPRFEAQTGGNRSVLDNVLPDMAPLVNPYWSRFAPMDPTM). N27 carries an N-linked (GlcNAc...) asparagine glycan. Residues 57–81 (SKILGLFTLVILIISCCGNGVVVYI) traverse the membrane as a helical segment. Residues 82 to 93 (FGGTKSLRTPAN) lie on the Cytoplasmic side of the membrane. A helical transmembrane segment spans residues 94–119 (LLVLNLAFSDFCMMASQSPVMIINFY). The Extracellular portion of the chain corresponds to 120 to 133 (YETWVLGPLWCDIY). A disulfide bridge connects residues C130 and C207. A helical transmembrane segment spans residues 134–153 (AACGSLFGCVSIWSMCMIAF). At 154-172 (DRYNVIVKGINGTPMTIKT) the chain is on the cytoplasmic side. The helical transmembrane segment at 173 to 196 (SIMKIAFIWMMAVFWTIMPLIGWS) threads the bilayer. At 197-220 (SYVPEGNLTACSIDYMTRQWNPRS) the chain is on the extracellular side. A helical transmembrane segment spans residues 221 to 248 (YLITYSLFVYYTPLFMICYSYWFIIATV). Over 249-283 (AAHEKAMRDQAKKMNVKSLRSSEDCDKSAENKLAK) the chain is Cytoplasmic. Residues 284–307 (VALTTISLWFMAWTPYLIICYFGL) form a helical membrane-spanning segment. Residues 308-314 (FKIDGLT) lie on the Extracellular side of the membrane. The chain crosses the membrane as a helical span at residues 315–339 (PLTTIWGATFAKTSAVYNPIVYGIS). An N6-(retinylidene)lysine modification is found at K326. The Cytoplasmic portion of the chain corresponds to 340–381 (HPKYRLVLKEKCPMCVCGSTDEPKPDAPPSDTETTSEAESKA). The tract at residues 358–381 (STDEPKPDAPPSDTETTSEAESKA) is disordered. Residues 370-381 (DTETTSEAESKA) show a composition bias toward polar residues.

It belongs to the G-protein coupled receptor 1 family. Opsin subfamily. In terms of processing, some or all of the Ser/Thr residues present in the C-terminal part may be phosphorylated.

It is found in the membrane. Visual pigments are the light-absorbing molecules that mediate vision. They consist of an apoprotein, opsin, covalently linked to cis-retinal. This chain is Opsin Rh2 (Rh2), found in Drosophila pseudoobscura pseudoobscura (Fruit fly).